Consider the following 434-residue polypeptide: Methylenetetrahydrofolate--tRNA-(uracil-5-)-methyltransferase TrmFO (434 aa).

Position 9–14 (9–14 (GAGLAG)) interacts with FAD.

Belongs to the MnmG family. TrmFO subfamily. FAD is required as a cofactor.

It localises to the cytoplasm. The enzyme catalyses uridine(54) in tRNA + (6R)-5,10-methylene-5,6,7,8-tetrahydrofolate + NADH + H(+) = 5-methyluridine(54) in tRNA + (6S)-5,6,7,8-tetrahydrofolate + NAD(+). The catalysed reaction is uridine(54) in tRNA + (6R)-5,10-methylene-5,6,7,8-tetrahydrofolate + NADPH + H(+) = 5-methyluridine(54) in tRNA + (6S)-5,6,7,8-tetrahydrofolate + NADP(+). In terms of biological role, catalyzes the folate-dependent formation of 5-methyl-uridine at position 54 (M-5-U54) in all tRNAs. This chain is Methylenetetrahydrofolate--tRNA-(uracil-5-)-methyltransferase TrmFO, found in Listeria welshimeri serovar 6b (strain ATCC 35897 / DSM 20650 / CCUG 15529 / CIP 8149 / NCTC 11857 / SLCC 5334 / V8).